A 336-amino-acid polypeptide reads, in one-letter code: Ribosomal RNA large subunit methyltransferase F (336 aa).

This sequence belongs to the methyltransferase superfamily. METTL16/RlmF family.

The protein resides in the cytoplasm. The catalysed reaction is adenosine(1618) in 23S rRNA + S-adenosyl-L-methionine = N(6)-methyladenosine(1618) in 23S rRNA + S-adenosyl-L-homocysteine + H(+). Its function is as follows. Specifically methylates the adenine in position 1618 of 23S rRNA. The sequence is that of Ribosomal RNA large subunit methyltransferase F from Yersinia pestis bv. Antiqua (strain Nepal516).